Reading from the N-terminus, the 617-residue chain is V-type proton ATPase catalytic subunit A (617 aa).

The residue at position 2 (Asp2) is an N-acetylalanine. At Thr136 the chain carries Phosphothreonine. Gly250–Thr257 contacts ATP. A Phosphoserine; by AMPK modification is found at Ser384.

Belongs to the ATPase alpha/beta chains family. V-ATPase is a heteromultimeric enzyme made up of two complexes: the ATP-hydrolytic V1 complex and the proton translocation V0 complex. The V1 complex consists of three catalytic AB heterodimers that form a heterohexamer, three peripheral stalks each consisting of EG heterodimers, one central rotor including subunits D and F, and the regulatory subunits C and H. The proton translocation complex V0 consists of the proton transport subunit a, a ring of proteolipid subunits c9c'', rotary subunit d, subunits e and f, and the accessory subunits ATP6AP1/Ac45 and ATP6AP2/PRR. Interacts with the V0 complex V-ATPase subunit a4 ATP6V0A4. Interacts with WFS1. Interacts with alpha-crystallin B chain/CRYAB and with MTOR, forming a ternary complex. As to quaternary structure, (Microbial infection) Interacts with Rabies virus protein M; this interaction promotes virion uncoating. Phosphorylation at Ser-384 by AMPK down-regulates its enzyme activity. High expression in the skin.

The protein resides in the cytoplasm. It localises to the cytosol. It is found in the cytoplasmic vesicle. The protein localises to the secretory vesicle. Its subcellular location is the clathrin-coated vesicle membrane. The protein resides in the lysosome. It carries out the reaction ATP + H2O + 4 H(+)(in) = ADP + phosphate + 5 H(+)(out). With respect to regulation, ATP hydrolysis occurs at the interface between the nucleotide-binding domains of subunits A and B. ATP hydrolysis triggers a conformational change in the subunits D and F, which induces a shift of subunit d. The c-ring is subsequently rotated and results in a continuous proton translocation across the membrane. In terms of biological role, catalytic subunit of the V1 complex of vacuolar(H+)-ATPase (V-ATPase), a multisubunit enzyme composed of a peripheral complex (V1) that hydrolyzes ATP and a membrane integral complex (V0) that translocates protons. V-ATPase is responsible for acidifying and maintaining the pH of intracellular compartments and in some cell types, is targeted to the plasma membrane, where it is responsible for acidifying the extracellular environment. In aerobic conditions, involved in intracellular iron homeostasis, thus triggering the activity of Fe(2+) prolyl hydroxylase (PHD) enzymes, and leading to HIF1A hydroxylation and subsequent proteasomal degradation. May play a role in neurite development and synaptic connectivity. (Microbial infection) Plays an important role in virion uncoating during Rabies virus replication after membrane fusion. Specifically, participates in the dissociation of incoming viral matrix M proteins uncoating through direct interaction. The chain is V-type proton ATPase catalytic subunit A (ATP6V1A) from Homo sapiens (Human).